A 1262-amino-acid polypeptide reads, in one-letter code: MIEFWKSEYTRILSICHDSGTQYRNKNVRMRSLYLEKVWVAFKSFAYWKEVIWKTKQEFRAQYSFPKTSLEANKVDDANTHSPKFVMEVIDVFVENLNDLMKINDPSSWLFVPGHMKEQIEKVLKELKLLRFFVCFVSNKCIQPQYQHTTFYTHALIEASHNAMVVWLHLPVYGIGNQDLAPSEVSRLLSDFMEMKIKSIQPGISRNSIYIDVLQALKSTIPQAQQKHVAESGIVEIPTHSLTVGLSDQMANLQEMLCLLRDNLIHLPILDLEFHLQDMDSVIVDAGLLIYSLYDIKGEKEDTILEDIKRELGFDLPRNIEPIKVMVYLVMQKAFQCNLPRIHGLGYVDFLLKNLKDFQGRYSDSLAFLKNQLQVIQTKFESMQPFLKVVVEEPHNKLKTLNEDCATQIIRKAYEVEYVVDACINKEVPQWCIERWLLDIIEEITCIKEKIQEKNTVEDTMKSVIASSQLARTPRMNEEIVGFEDVIETLRKKLLNGTKGQDVISMHGMPGLGKTTLANRLYSDRSVVSQFDICAQCCVSQVYSYKDLLLALLRDAIGEGSVRTELHANELADMLRKTLLPRRYLILVDDVWENSVWDDLSGCFPDVNNRSRIILTTRHHEVAKYASVHSDPLHLRMFDEVESWKLLEKKVFGEESCSPLLRDIGQRIAKMCGQLPLSIVLVAGILSEMEKEVECWEQVANNLGTHIHNDSRAVVDQSYHVLPCHLKSCFLYFGAFLEDRVIDIPRLIRLWISESFIKSCEGRSLEDIAEGYLENLIGRNLVMVTQRDDSDGKVKACRLHDVLLDFCKERAAEENFLLWINRDQITKPSSCVYSHNQHAHLAFTDMKNLVEWSASCSCVGSVLFKNYDPYFAGRPLSSHAFSISRILLNFKFLKVLDLEHQVVIDSIPTELFYLRYISAHIEQNSIPSSISNLWNLETLILNRTSAATGKTLLLPSTVWDMVKLRHLHIPKFSPENKKALLENSARLDDLETLFNPYFTRVEDAELMLRKTPNLRKLICEVQCLEYPHQYHVLNFPIRLEMLKLHQSNIFKPISFCISAPNLKYLELSGFYLDSQYLSETADHLKHLEVLKLYYVEFGDHREWKVSNGMFPQLKILKLKCVSLLKWIVADDAFPNLEQLVLRRCRHLMEIPSCFMDILSLQYIEVENCNESVVKSAMNIQETQVEDNQNTNFKLVLIEIHLFCLFDMKGIESISTDMKEKKLTVTRDVDADEVQLVVEKLRNVAYADEVQLVVEKLRKRGML.

2 coiled-coil regions span residues 364–384 and 475–496; these read DSLA…ESMQ and RMNE…KLLN. The NB-ARC domain occupies 475–761; it reads RMNEEIVGFE…ISESFIKSCE (287 aa). 508-515 serves as a coordination point for ATP; it reads GMPGLGKT. LRR repeat units lie at residues 890–914, 933–961, 1036–1059, 1064–1083, 1084–1112, and 1133–1157; these read FKFL…LFYL, LWNL…VWDM, PIRL…CISA, YLEL…TADH, LKHL…MFPQ, and FPNL…FMDI. An HMA domain is found at 1181–1248; the sequence is ETQVEDNQNT…KLRNVAYADE (68 aa).

This sequence belongs to the disease resistance NB-LRR family.

It localises to the cytoplasm. The protein resides in the membrane. Confers resistance to late blight (Phytophthora infestans) races carrying the avirulence gene Avr1. Resistance proteins guard the plant against pathogens that contain an appropriate avirulence protein via an indirect interaction with this avirulence protein. That triggers a defense system including the hypersensitive response, which restricts the pathogen growth. The sequence is that of Putative late blight resistance protein homolog R1B-23 (R1B-23) from Solanum demissum (Wild potato).